A 305-amino-acid chain; its full sequence is Flavin-dependent thymidylate synthase (305 aa).

The region spanning 50–261 (GFVRLIDYLG…PCATASFENH (212 aa)) is the ThyX domain. FAD is bound by residues Ser96, 119 to 121 (RHR), and Glu127. Residues 116-119 (QWMR), 127-131 (EVSSR), and Arg200 each bind dUMP. The ThyX motif motif lies at 119-129 (RHRTARISEVS). Residues 216–218 (DLH) and His222 each bind FAD. Position 227 (Arg227) interacts with dUMP. Arg227 acts as the Involved in ionization of N3 of dUMP, leading to its activation in catalysis.

This sequence belongs to the thymidylate synthase ThyX family. As to quaternary structure, homotetramer. FAD is required as a cofactor.

The enzyme catalyses dUMP + (6R)-5,10-methylene-5,6,7,8-tetrahydrofolate + NADPH + H(+) = dTMP + (6S)-5,6,7,8-tetrahydrofolate + NADP(+). It participates in pyrimidine metabolism; dTTP biosynthesis. In terms of biological role, catalyzes the reductive methylation of 2'-deoxyuridine-5'-monophosphate (dUMP) to 2'-deoxythymidine-5'-monophosphate (dTMP) while utilizing 5,10-methylenetetrahydrofolate (mTHF) as the methyl donor, and NADPH and FADH(2) as the reductant. This chain is Flavin-dependent thymidylate synthase, found in Treponema pallidum (strain Nichols).